Consider the following 227-residue polypeptide: Cytochrome c oxidase subunit 2 (227 aa).

The Mitochondrial intermembrane portion of the chain corresponds to 1 to 14 (MAYPFQLGLQDATS). A helical transmembrane segment spans residues 15–45 (PIMEELMNFHDHTLMIVFLISSLVLYIISLM). The Mitochondrial matrix segment spans residues 46–59 (LTTKLTHTSTMDAQ). The helical transmembrane segment at 60-87 (EVETIWTILPAAILILIALPSLRILYMM) threads the bilayer. The Mitochondrial intermembrane segment spans residues 88-227 (DEINNPVLTV…YFENWSASMI (140 aa)). Positions 161, 196, 198, 200, 204, and 207 each coordinate Cu cation. Glu-198 is a binding site for Mg(2+). Tyr-218 bears the Phosphotyrosine mark.

This sequence belongs to the cytochrome c oxidase subunit 2 family. As to quaternary structure, component of the cytochrome c oxidase (complex IV, CIV), a multisubunit enzyme composed of 14 subunits. The complex is composed of a catalytic core of 3 subunits MT-CO1, MT-CO2 and MT-CO3, encoded in the mitochondrial DNA, and 11 supernumerary subunits COX4I, COX5A, COX5B, COX6A, COX6B, COX6C, COX7A, COX7B, COX7C, COX8 and NDUFA4, which are encoded in the nuclear genome. The complex exists as a monomer or a dimer and forms supercomplexes (SCs) in the inner mitochondrial membrane with NADH-ubiquinone oxidoreductase (complex I, CI) and ubiquinol-cytochrome c oxidoreductase (cytochrome b-c1 complex, complex III, CIII), resulting in different assemblies (supercomplex SCI(1)III(2)IV(1) and megacomplex MCI(2)III(2)IV(2)). Found in a complex with TMEM177, COA6, COX18, COX20, SCO1 and SCO2. Interacts with TMEM177 in a COX20-dependent manner. Interacts with COX20. Interacts with COX16. Requires Cu cation as cofactor.

Its subcellular location is the mitochondrion inner membrane. The enzyme catalyses 4 Fe(II)-[cytochrome c] + O2 + 8 H(+)(in) = 4 Fe(III)-[cytochrome c] + 2 H2O + 4 H(+)(out). Component of the cytochrome c oxidase, the last enzyme in the mitochondrial electron transport chain which drives oxidative phosphorylation. The respiratory chain contains 3 multisubunit complexes succinate dehydrogenase (complex II, CII), ubiquinol-cytochrome c oxidoreductase (cytochrome b-c1 complex, complex III, CIII) and cytochrome c oxidase (complex IV, CIV), that cooperate to transfer electrons derived from NADH and succinate to molecular oxygen, creating an electrochemical gradient over the inner membrane that drives transmembrane transport and the ATP synthase. Cytochrome c oxidase is the component of the respiratory chain that catalyzes the reduction of oxygen to water. Electrons originating from reduced cytochrome c in the intermembrane space (IMS) are transferred via the dinuclear copper A center (CU(A)) of subunit 2 and heme A of subunit 1 to the active site in subunit 1, a binuclear center (BNC) formed by heme A3 and copper B (CU(B)). The BNC reduces molecular oxygen to 2 water molecules using 4 electrons from cytochrome c in the IMS and 4 protons from the mitochondrial matrix. The chain is Cytochrome c oxidase subunit 2 (MT-CO2) from Praomys tullbergi (Tullberg's soft-furred rat).